A 217-amino-acid chain; its full sequence is Glyoxalase ElbB (217 aa).

Cys135 acts as the Nucleophile in catalysis.

It belongs to the peptidase C56 family. In terms of assembly, homodimer.

The enzyme catalyses glyoxal + H2O = glycolate + H(+). Its function is as follows. Displays glyoxalase activity, catalyzing the conversion of glyoxal to glycolate. However, this apparent glyoxalase activity may reflect a protein deglycase activity, which could be the primary function of this protein like other DJ-1 superfamily members such as PARK7, YajL, YhbO and HchA. Is not able to use methylglyoxal as substrate. In Escherichia coli (strain K12), this protein is Glyoxalase ElbB.